A 403-amino-acid polypeptide reads, in one-letter code: Ribosomal RNA large subunit methyltransferase I (403 aa).

In terms of domain architecture, PUA spans 9-88 (YPRLILSKGR…ESIDIAFFTR (80 aa)).

It belongs to the methyltransferase superfamily. RlmI family.

Its subcellular location is the cytoplasm. The enzyme catalyses cytidine(1962) in 23S rRNA + S-adenosyl-L-methionine = 5-methylcytidine(1962) in 23S rRNA + S-adenosyl-L-homocysteine + H(+). Functionally, specifically methylates the cytosine at position 1962 (m5C1962) of 23S rRNA. This chain is Ribosomal RNA large subunit methyltransferase I, found in Salmonella paratyphi C (strain RKS4594).